The sequence spans 306 residues: Glutamyl-Q tRNA(Asp) synthetase (306 aa).

Residues 29 to 33 and D65 each bind L-glutamate; that span reads RFAPS. The 'HIGH' region motif lies at 32–42; the sequence is PSPTGPLHLGN. C121, C123, Y141, and C145 together coordinate Zn(2+). Positions 188 and 206 each coordinate L-glutamate. A 'KMSKS' region motif is present at residues 244-248; the sequence is KLAKR. K247 lines the ATP pocket.

Belongs to the class-I aminoacyl-tRNA synthetase family. GluQ subfamily. The cofactor is Zn(2+).

Catalyzes the tRNA-independent activation of glutamate in presence of ATP and the subsequent transfer of glutamate onto a tRNA(Asp). Glutamate is transferred on the 2-amino-5-(4,5-dihydroxy-2-cyclopenten-1-yl) moiety of the queuosine in the wobble position of the QUC anticodon. The chain is Glutamyl-Q tRNA(Asp) synthetase from Prochlorococcus marinus (strain MIT 9313).